The sequence spans 161 residues: Phosphopantetheine adenylyltransferase (161 aa).

Thr9 contacts substrate. ATP contacts are provided by residues 9–10 (TF) and His17. Substrate contacts are provided by Lys41, Leu73, and Arg87. Residues 88–90 (GMR), Glu98, and 123–129 (WSYVSST) contribute to the ATP site.

It belongs to the bacterial CoaD family. Homohexamer. It depends on Mg(2+) as a cofactor.

It localises to the cytoplasm. It carries out the reaction (R)-4'-phosphopantetheine + ATP + H(+) = 3'-dephospho-CoA + diphosphate. It participates in cofactor biosynthesis; coenzyme A biosynthesis; CoA from (R)-pantothenate: step 4/5. In terms of biological role, reversibly transfers an adenylyl group from ATP to 4'-phosphopantetheine, yielding dephospho-CoA (dPCoA) and pyrophosphate. This Actinobacillus succinogenes (strain ATCC 55618 / DSM 22257 / CCUG 43843 / 130Z) protein is Phosphopantetheine adenylyltransferase.